The chain runs to 146 residues: Hemoglobin subunit beta (146 aa).

Residue Val1 is modified to N-acetylvaline. In terms of domain architecture, Globin spans 2–146; that stretch reads HLSGEEKAAV…VANALAHKYH (145 aa). Residue Thr12 is modified to Phosphothreonine. The residue at position 44 (Ser44) is a Phosphoserine. Lys59 carries the post-translational modification N6-acetyllysine. Residue His63 participates in heme b binding. Lys82 is subject to N6-acetyllysine. Heme b is bound at residue His92. Cys93 is modified (S-nitrosocysteine). Lys144 carries the post-translational modification N6-acetyllysine.

This sequence belongs to the globin family. As to quaternary structure, heterotetramer of two alpha chains and two beta chains. Red blood cells.

Involved in oxygen transport from the lung to the various peripheral tissues. The polypeptide is Hemoglobin subunit beta (HBB) (Tupaia glis (Common tree shrew)).